The chain runs to 224 residues: Pyridoxal 5'-phosphate synthase subunit SNO1 (224 aa).

67–69 (GES) lines the L-glutamine pocket. The Nucleophile role is filled by Cys100. L-glutamine is bound by residues Arg129 and 160-161 (IR). Residues His203 and Glu205 each act as charge relay system in the active site.

It belongs to the glutaminase PdxT/SNO family.

It catalyses the reaction aldehydo-D-ribose 5-phosphate + D-glyceraldehyde 3-phosphate + L-glutamine = pyridoxal 5'-phosphate + L-glutamate + phosphate + 3 H2O + H(+). It carries out the reaction L-glutamine + H2O = L-glutamate + NH4(+). Its pathway is cofactor biosynthesis; pyridoxal 5'-phosphate biosynthesis. Its function is as follows. Catalyzes the hydrolysis of glutamine to glutamate and ammonia as part of the biosynthesis of pyridoxal 5'-phosphate. The resulting ammonia molecule is channeled to the active site of a SNZ isoform. This is Pyridoxal 5'-phosphate synthase subunit SNO1 (SNO1) from Saccharomyces cerevisiae (strain ATCC 204508 / S288c) (Baker's yeast).